The chain runs to 472 residues: UDP-N-acetylmuramate--L-alanine ligase (472 aa).

ATP is bound at residue 122–128; the sequence is GSHGKTT.

This sequence belongs to the MurCDEF family.

It localises to the cytoplasm. It carries out the reaction UDP-N-acetyl-alpha-D-muramate + L-alanine + ATP = UDP-N-acetyl-alpha-D-muramoyl-L-alanine + ADP + phosphate + H(+). The protein operates within cell wall biogenesis; peptidoglycan biosynthesis. Its function is as follows. Cell wall formation. The sequence is that of UDP-N-acetylmuramate--L-alanine ligase from Myxococcus xanthus (strain DK1622).